Reading from the N-terminus, the 494-residue chain is Splicing regulatory glutamine/lysine-rich protein 1 (494 aa).

Positions R69 to N145 constitute an RRM domain. Phosphoserine occurs at positions 174 and 187. Positions I176–V494 are disordered. The span at E183–G192 shows a compositional bias: basic and acidic residues. The span at G193–D262 shows a compositional bias: basic residues. Basic and acidic residues predominate over residues K263 to R340. T348 is subject to Phosphothreonine. Over residues R357–S373 the composition is skewed to basic residues. Positions R404–V474 are enriched in basic and acidic residues. Residues H476–S486 are compositionally biased toward polar residues. K490 participates in a covalent cross-link: Glycyl lysine isopeptide (Lys-Gly) (interchain with G-Cter in SUMO2).

The protein belongs to the splicing factor SR family. In terms of assembly, homodimer. Binds SFRS1, SFRS2, SFRS3 and SFRS6. Interacts with the spliceosome. Interacts with SREK1IP1.

Its subcellular location is the nucleus. Functionally, participates in the regulation of alternative splicing by modulating the activity of other splice facors. Inhibits the splicing activity of SFRS1, SFRS2 and SFRS6. Augments the splicing activity of SFRS3. This Mus musculus (Mouse) protein is Splicing regulatory glutamine/lysine-rich protein 1 (Srek1).